Here is a 178-residue protein sequence, read N- to C-terminus: Protein PilI (178 aa).

The CheW-like domain occupies S34–F173.

Its function is as follows. May be a part of a signal-transduction system that regulates twitching motility by controlling pilus function (extension and retraction). This is Protein PilI (pilI) from Pseudomonas aeruginosa (strain ATCC 15692 / DSM 22644 / CIP 104116 / JCM 14847 / LMG 12228 / 1C / PRS 101 / PAO1).